The chain runs to 228 residues: L-ribulose-5-phosphate 4-epimerase UlaF (228 aa).

Residues 26-27, 43-44, and 72-73 contribute to the substrate site; these read GN, SG, and SS. Residues Asp-74, His-93, and His-95 each coordinate Zn(2+). Catalysis depends on Asp-118, which acts as the Proton donor/acceptor. His-167 contributes to the Zn(2+) binding site. The active-site Proton donor/acceptor is Tyr-225.

This sequence belongs to the aldolase class II family. AraD/FucA subfamily. Requires Zn(2+) as cofactor.

It catalyses the reaction L-ribulose 5-phosphate = D-xylulose 5-phosphate. The protein operates within cofactor degradation; L-ascorbate degradation; D-xylulose 5-phosphate from L-ascorbate: step 4/4. Its function is as follows. Catalyzes the isomerization of L-ribulose 5-phosphate to D-xylulose 5-phosphate. Is involved in the anaerobic L-ascorbate utilization. This is L-ribulose-5-phosphate 4-epimerase UlaF from Escherichia fergusonii (strain ATCC 35469 / DSM 13698 / CCUG 18766 / IAM 14443 / JCM 21226 / LMG 7866 / NBRC 102419 / NCTC 12128 / CDC 0568-73).